The chain runs to 106 residues: Small ribosomal subunit protein uS10 (106 aa).

The protein belongs to the universal ribosomal protein uS10 family. Part of the 30S ribosomal subunit.

Functionally, involved in the binding of tRNA to the ribosomes. This Pyrobaculum arsenaticum (strain DSM 13514 / JCM 11321 / PZ6) protein is Small ribosomal subunit protein uS10.